Consider the following 153-residue polypeptide: DNA gyrase inhibitor 1 (153 aa).

The protein belongs to the DNA gyrase inhibitor family. As to quaternary structure, interacts with DNA gyrase.

The protein localises to the cytoplasm. In terms of biological role, inhibits the supercoiling activity of DNA gyrase. Acts by inhibiting DNA gyrase at an early step, prior to (or at the step of) binding of DNA by the gyrase. It protects cells against toxins that target DNA gyrase, by inhibiting activity of these toxins and reducing the formation of lethal double-strand breaks in the cell. The protein is DNA gyrase inhibitor 1 of Dickeya dadantii (strain 3937) (Erwinia chrysanthemi (strain 3937)).